The primary structure comprises 379 residues: Cytochrome b (379 aa).

4 consecutive transmembrane segments (helical) span residues 33–53 (FGSL…FLAM), 77–98 (WLIR…FIHV), 113–133 (WNIG…GYVL), and 178–198 (FFAF…VHLL). Heme b-binding residues include histidine 83 and histidine 97. Heme b-binding residues include histidine 182 and histidine 196. Histidine 201 contacts a ubiquinone. The next 4 membrane-spanning stretches (helical) occupy residues 226 to 246 (IKDL…ALFF), 288 to 308 (LGGV…PLLN), 320 to 340 (ITQT…WIGG), and 347 to 367 (FTTI…ILMP).

The protein belongs to the cytochrome b family. As to quaternary structure, the cytochrome bc1 complex contains 11 subunits: 3 respiratory subunits (MT-CYB, CYC1 and UQCRFS1), 2 core proteins (UQCRC1 and UQCRC2) and 6 low-molecular weight proteins (UQCRH/QCR6, UQCRB/QCR7, UQCRQ/QCR8, UQCR10/QCR9, UQCR11/QCR10 and a cleavage product of UQCRFS1). This cytochrome bc1 complex then forms a dimer. Heme b serves as cofactor.

It localises to the mitochondrion inner membrane. Functionally, component of the ubiquinol-cytochrome c reductase complex (complex III or cytochrome b-c1 complex) that is part of the mitochondrial respiratory chain. The b-c1 complex mediates electron transfer from ubiquinol to cytochrome c. Contributes to the generation of a proton gradient across the mitochondrial membrane that is then used for ATP synthesis. This Akodon affinis (Colombian grass mouse) protein is Cytochrome b (MT-CYB).